Here is a 414-residue protein sequence, read N- to C-terminus: MKNSILEELKWRGLIKQITNESKILDAQNNNDAVYCGFDPTADSLHVGHLMMIITLKRFADYNFKPIALIGGATGMIGDPSFKANERVLQTKDQVEHNINKISAQLKQIIPNVNFVNNNTWLSNISLIDFLRDIGKHFNLSYLLAKESIATRIQTGLSVTEFCYTMLQAYDFYYLYKNNNCSIQIGGSDQWGNITSGIDFISDTINKNNKAAGLTINLLTKSDGQKFGKTESGTIWLDKTKTSEYEFYQFWFNQTDQDSINLLKCLTFLTKEQIDNLIKEHQNQSSKHLLQKALASEMTKFVHQQQGLDKALKLTEAFFSGDLFSLTNDLFKMALNSLPNTQINKDTKVIDALIEVKAASSKREAREFLTNKAIMINNQIIEDENTLISSFDLIQNKYLLVKKGKKKYFVILIK.

L-tyrosine is bound at residue Tyr35. The 'HIGH' region signature appears at 40 to 49; it reads PTADSLHVGH. Tyr164 and Gln168 together coordinate L-tyrosine. The 'KMSKS' region motif lies at 226–230; it reads KFGKT. Position 229 (Lys229) interacts with ATP. The 68-residue stretch at 347-414 folds into the S4 RNA-binding domain; sequence TKVIDALIEV…KKKYFVILIK (68 aa).

It belongs to the class-I aminoacyl-tRNA synthetase family. TyrS type 1 subfamily. As to quaternary structure, homodimer.

The protein localises to the cytoplasm. The enzyme catalyses tRNA(Tyr) + L-tyrosine + ATP = L-tyrosyl-tRNA(Tyr) + AMP + diphosphate + H(+). Functionally, catalyzes the attachment of tyrosine to tRNA(Tyr) in a two-step reaction: tyrosine is first activated by ATP to form Tyr-AMP and then transferred to the acceptor end of tRNA(Tyr). This Mycoplasma mycoides subsp. mycoides SC (strain CCUG 32753 / NCTC 10114 / PG1) protein is Tyrosine--tRNA ligase.